Here is a 186-residue protein sequence, read N- to C-terminus: ATP synthase subunit delta (186 aa).

The protein belongs to the ATPase delta chain family. In terms of assembly, F-type ATPases have 2 components, F(1) - the catalytic core - and F(0) - the membrane proton channel. F(1) has five subunits: alpha(3), beta(3), gamma(1), delta(1), epsilon(1). CF(0) has four main subunits: a(1), b(1), b'(1) and c(10-14). The alpha and beta chains form an alternating ring which encloses part of the gamma chain. F(1) is attached to F(0) by a central stalk formed by the gamma and epsilon chains, while a peripheral stalk is formed by the delta, b and b' chains.

The protein resides in the cell inner membrane. F(1)F(0) ATP synthase produces ATP from ADP in the presence of a proton or sodium gradient. F-type ATPases consist of two structural domains, F(1) containing the extramembraneous catalytic core and F(0) containing the membrane proton channel, linked together by a central stalk and a peripheral stalk. During catalysis, ATP synthesis in the catalytic domain of F(1) is coupled via a rotary mechanism of the central stalk subunits to proton translocation. Its function is as follows. This protein is part of the stalk that links CF(0) to CF(1). It either transmits conformational changes from CF(0) to CF(1) or is implicated in proton conduction. This Rhodopseudomonas palustris (strain BisA53) protein is ATP synthase subunit delta.